Here is a 239-residue protein sequence, read N- to C-terminus: Putative ankyrin repeat protein RBE_0489 (239 aa).

ANK repeat units follow at residues 23 to 52, 80 to 109, and 113 to 143; these read ISSR…SPNA, GIDT…FINA, and FGFT…SLTL.

The sequence is that of Putative ankyrin repeat protein RBE_0489 from Rickettsia bellii (strain RML369-C).